A 400-amino-acid polypeptide reads, in one-letter code: Multiphosphoryl transfer protein (400 aa).

Residues 2–142 (LELTTQDIQL…QQIIAIIKGE (141 aa)) enclose the PTS EIIA type-2 domain. His62 functions as the Tele-phosphohistidine intermediate; for EIIA activity in the catalytic mechanism. His62 is subject to Phosphohistidine; by HPr. Positions 310-400 (AHTATFRIKN…VAINAGLGEG (91 aa)) constitute an HPr domain. The active-site Pros-phosphohistidine intermediate; for HPr activity is His324. The residue at position 324 (His324) is a Phosphohistidine; by EI.

The protein resides in the cytoplasm. In terms of biological role, the phosphoenolpyruvate-dependent sugar phosphotransferase system (sugar PTS), a major carbohydrate active transport system, catalyzes the phosphorylation of incoming sugar substrates concomitantly with their translocation across the cell membrane. The enzyme II FruAB PTS system is involved in fructose transport. This Vibrio cholerae serotype O1 (strain ATCC 39315 / El Tor Inaba N16961) protein is Multiphosphoryl transfer protein.